The following is a 1854-amino-acid chain: Protein virilizer (1854 aa).

The residue at position 186 (serine 186) is a Phosphoserine. 2 stretches are compositionally biased toward basic and acidic residues: residues 202 to 214 and 236 to 259; these read YHQHAEEQEQREM and THSESNDREYIRCSRDKGSRDWSR. Disordered stretches follow at residues 202–361, 777–821, 1570–1589, 1720–1788, and 1804–1854; these read YHQH…EIIG, NPEE…GKPV, TSTETPPEAEGEANPSASSC, VRGR…NRGS, and IGSP…SYLR. Phosphoserine is present on residues serine 258, serine 260, and serine 276. Residues 275–285 are compositionally biased toward basic and acidic residues; that stretch reads RSRSVVDEHKW. Threonine 288 is subject to Phosphothreonine. Position 295 is a phosphoserine (serine 295). Residue threonine 297 is modified to Phosphothreonine. A phosphoserine mark is found at serine 301 and serine 312. 2 stretches are compositionally biased toward basic and acidic residues: residues 325–343 and 777–796; these read HSSESLHRGERDRDDEDRS and NPEEKEEKAEKSDAEDKAME. Positions 779–808 form a coiled coil; sequence EEKEEKAEKSDAEDKAMEVENEAVEAGGEK. Composition is skewed to low complexity over residues 1738 to 1748 and 1816 to 1838; these read SRPPNTSRPPS and SYRSASDSHFSSSDSHYSSPHYS.

This sequence belongs to the vir family. As to quaternary structure, component of the WMM complex, a N6-methyltransferase complex composed of a catalytic subcomplex, named MAC, and of an associated subcomplex, named MACOM. The MAC subcomplex is composed of Ime4/Mettl3 and Mettl14. The MACOM subcomplex is composed of fl(2)d, Flacc/Xio, Hakai, vir, and, in some cases of nito. Part of a complex containing fl(2)d, Sxl and vir.

The protein localises to the nucleus. In terms of biological role, associated component of the WMM complex, a complex that mediates N6-methyladenosine (m6A) methylation of mRNAs, a modification that plays a role in the efficiency of mRNA splicing and is required for sex determination. Required for sex determination and dosage compensation via Sxl alternative splicing: m6A methylation acts as a key regulator of Sxl pre-mRNA and promotes female-specific alternative splicing of Sxl, which determines female physiognomy. M6A methylation is also required for neuronal functions. Required for proper inclusion of regulated exons in Ubx transcripts, leading to isoforms Ia/b and IIa/b. This chain is Protein virilizer, found in Drosophila melanogaster (Fruit fly).